Here is a 114-residue protein sequence, read N- to C-terminus: FK506-binding protein 1 (114 aa).

The region spanning 26 to 114 (GDLVTIHYTG…VFDVELLKIN (89 aa)) is the PPIase FKBP-type domain.

The protein belongs to the FKBP-type PPIase family. FKBP1 subfamily.

It localises to the cytoplasm. The catalysed reaction is [protein]-peptidylproline (omega=180) = [protein]-peptidylproline (omega=0). Its activity is regulated as follows. Inhibited by both FK506 and rapamycin. In terms of biological role, PPIases accelerate the folding of proteins. It catalyzes the cis-trans isomerization of proline imidic peptide bonds in oligopeptides. This is FK506-binding protein 1 (FPR1) from Kluyveromyces lactis (strain ATCC 8585 / CBS 2359 / DSM 70799 / NBRC 1267 / NRRL Y-1140 / WM37) (Yeast).